A 201-amino-acid chain; its full sequence is Adenylyl-sulfate kinase (201 aa).

Position 35–42 (35–42 (GLSGSGKS)) interacts with ATP. The active-site Phosphoserine intermediate is the S109.

The protein belongs to the APS kinase family.

It catalyses the reaction adenosine 5'-phosphosulfate + ATP = 3'-phosphoadenylyl sulfate + ADP + H(+). The protein operates within sulfur metabolism; hydrogen sulfide biosynthesis; sulfite from sulfate: step 2/3. Its function is as follows. Catalyzes the synthesis of activated sulfate. This is Adenylyl-sulfate kinase from Salmonella typhi.